The primary structure comprises 132 residues: Small ribosomal subunit protein uS8 (132 aa).

Belongs to the universal ribosomal protein uS8 family. In terms of assembly, part of the 30S ribosomal subunit. Contacts proteins S5 and S12.

One of the primary rRNA binding proteins, it binds directly to 16S rRNA central domain where it helps coordinate assembly of the platform of the 30S subunit. This Bacillus licheniformis (strain ATCC 14580 / DSM 13 / JCM 2505 / CCUG 7422 / NBRC 12200 / NCIMB 9375 / NCTC 10341 / NRRL NRS-1264 / Gibson 46) protein is Small ribosomal subunit protein uS8.